The primary structure comprises 76 residues: uncharacterized protein (76 aa).

This is an uncharacterized protein from Escherichia coli O157:H7.